Consider the following 101-residue polypeptide: Urease subunit beta (101 aa).

It belongs to the urease beta subunit family. In terms of assembly, heterotrimer of UreA (gamma), UreB (beta) and UreC (alpha) subunits. Three heterotrimers associate to form the active enzyme.

The protein localises to the cytoplasm. The enzyme catalyses urea + 2 H2O + H(+) = hydrogencarbonate + 2 NH4(+). It functions in the pathway nitrogen metabolism; urea degradation; CO(2) and NH(3) from urea (urease route): step 1/1. In Azotobacter vinelandii (strain DJ / ATCC BAA-1303), this protein is Urease subunit beta.